Here is a 447-residue protein sequence, read N- to C-terminus: Probable glycine dehydrogenase (decarboxylating) subunit 1 (447 aa).

It belongs to the GcvP family. N-terminal subunit subfamily. The glycine cleavage system is composed of four proteins: P, T, L and H. In this organism, the P 'protein' is a heterodimer of two subunits.

It catalyses the reaction N(6)-[(R)-lipoyl]-L-lysyl-[glycine-cleavage complex H protein] + glycine + H(+) = N(6)-[(R)-S(8)-aminomethyldihydrolipoyl]-L-lysyl-[glycine-cleavage complex H protein] + CO2. Its function is as follows. The glycine cleavage system catalyzes the degradation of glycine. The P protein binds the alpha-amino group of glycine through its pyridoxal phosphate cofactor; CO(2) is released and the remaining methylamine moiety is then transferred to the lipoamide cofactor of the H protein. The protein is Probable glycine dehydrogenase (decarboxylating) subunit 1 of Azorhizobium caulinodans (strain ATCC 43989 / DSM 5975 / JCM 20966 / LMG 6465 / NBRC 14845 / NCIMB 13405 / ORS 571).